We begin with the raw amino-acid sequence, 262 residues long: Phosphatidylglycerol--prolipoprotein diacylglyceryl transferase (262 aa).

Helical transmembrane passes span 9-29 (LGPL…ILAV), 41-61 (IIPD…ILGA), 80-100 (IFAI…GALV), and 109-129 (LINT…AQSL). Position 131 (Arg-131) interacts with a 1,2-diacyl-sn-glycero-3-phospho-(1'-sn-glycerol). Helical transmembrane passes span 167 to 187 (QPTF…ILIF), 197 to 217 (GHIT…IEGM), and 226 to 246 (GLRV…MIVI).

This sequence belongs to the Lgt family.

It localises to the cell membrane. The enzyme catalyses L-cysteinyl-[prolipoprotein] + a 1,2-diacyl-sn-glycero-3-phospho-(1'-sn-glycerol) = an S-1,2-diacyl-sn-glyceryl-L-cysteinyl-[prolipoprotein] + sn-glycerol 1-phosphate + H(+). It participates in protein modification; lipoprotein biosynthesis (diacylglyceryl transfer). In terms of biological role, catalyzes the transfer of the diacylglyceryl group from phosphatidylglycerol to the sulfhydryl group of the N-terminal cysteine of a prolipoprotein, the first step in the formation of mature lipoproteins. This Streptococcus pneumoniae (strain Taiwan19F-14) protein is Phosphatidylglycerol--prolipoprotein diacylglyceryl transferase.